The following is a 331-amino-acid chain: Activator of 90 kDa heat shock protein ATPase homolog 2 (331 aa).

This sequence belongs to the AHA1 family.

In terms of biological role, co-chaperone that stimulates HSP90 ATPase activity. The sequence is that of Activator of 90 kDa heat shock protein ATPase homolog 2 (Ahsa2) from Mus musculus (Mouse).